Consider the following 649-residue polypeptide: Exoribonuclease 2 (649 aa).

Residues 190–517 (RKDLTDLDFI…NHRLLKSIIK (328 aa)) enclose the RNB domain. An S1 motif domain is found at 562–644 (NQKFNAEITD…KTRSIIAKPV (83 aa)).

This sequence belongs to the RNR ribonuclease family. RNase II subfamily.

It is found in the cytoplasm. It carries out the reaction Exonucleolytic cleavage in the 3'- to 5'-direction to yield nucleoside 5'-phosphates.. In terms of biological role, involved in mRNA degradation. Hydrolyzes single-stranded polyribonucleotides processively in the 3' to 5' direction. This is Exoribonuclease 2 from Buchnera aphidicola subsp. Acyrthosiphon pisum (strain 5A).